Here is a 556-residue protein sequence, read N- to C-terminus: MLRARSAVSQSWKGFKTFSCVAVEVKNEPVLEFKEGSKERAELEEALRNLKGKTEEIPCVIGNEEVWTKDIRFQLSPFNHSHQVAKFCYADKDLLNKAIEASVAARREWDLKPVSDRAQIFFKAADIISGPKRAEVLAKTMIGQGKTVVQAEIDAAPELIDFFRFNAKHAIELEDQQPLDSDGSTNTMLYRGLEGFVAAVAPFNFTAIGGNLAGTPALMGNVVLWKPSDTAMSASYAVYKILRESGLPPNIIQFVPADGPVFGDTVTSSEHLAGINFTGSVPTFKRLWKQVAQNLDIYKNFPRVAGECGGKNFHFVHKSADVRSVVTGTIRSAFEYGGQKCSACSRMYVPDSLWPQIRQGLLDVYKQIKVGDPVEDFSTFFSAVIDDKSFSRIKGWLEHARSSPHLKIIAGGNCDDKKGYFVEPTIIETTDPQEKIMNEEIFGPVLTVYVYPENDYKKVLHLIDNTSPYALTGAIFPQDKSVIEEAGKALRNAAGNYYINDKSTGSIVAQQPFGGARASGTNDKPGGPHYVLRWTSPQVVKQTHVPLTEWKYPYMS.

Residues 1–17 (MLRARSAVSQSWKGFKT) constitute a mitochondrion transit peptide. Residues Lys-226 and 279 to 283 (GSVPT) contribute to the NAD(+) site. Glu-307 serves as the catalytic Proton acceptor. The Nucleophile role is filled by Cys-341. Residue Glu-440 coordinates NAD(+). Substrate is bound at residue Ser-506.

It belongs to the aldehyde dehydrogenase family.

It is found in the mitochondrion matrix. The catalysed reaction is L-glutamate 5-semialdehyde + NAD(+) + H2O = L-glutamate + NADH + 2 H(+). The protein operates within amino-acid degradation; L-proline degradation into L-glutamate; L-glutamate from L-proline: step 2/2. Functionally, irreversible conversion of delta-1-pyrroline-5-carboxylate (P5C), derived either from proline or ornithine, to glutamate. This is a necessary step in the pathway interconnecting the urea and tricarboxylic acid cycles. In Danio rerio (Zebrafish), this protein is Delta-1-pyrroline-5-carboxylate dehydrogenase, mitochondrial (aldh4a1).